Here is a 326-residue protein sequence, read N- to C-terminus: MEAQNQEVAALVEKIAGLHAAISKLPSLSPSAEVDALFTDLVTACVPASPVDVAKLGPEAQAMREELIRLCSAAEGHLEAHYADMLAAFDNPLDHLARFPYYGNYVNLSKLEYDLLVRYVPGIAPTRVAFVGSGPLPFSSLVLAAHHLPDAVFDNYDRCGAANERARRLFRGADEGLGARMAFHTADVATLTGELGAYDVVFLAALVGMAAEEKAGVIAHLGAHMADGAALVVSARHGARGFLYPIVDLEDIRRGGFDVLAVYHPDDEVINSVIVARKADPRRGGGLAGARGAVPVVSPPCKCCKMEAAAGAFQKAEEFAAKRLSV.

This sequence belongs to the nicotianamine synthase (NAS)-like family. As to expression, expressed in roots.

It catalyses the reaction 3 S-adenosyl-L-methionine = nicotianamine + 3 S-methyl-5'-thioadenosine + 3 H(+). Synthesizes nicotianamine, a polyamine that is the first intermediate in the synthesis of the phytosiderophores of the mugineic acid type found in gramineae which serve as a sensor for the physiological iron status within the plant, and/or might be involved in the transport of iron. The sequence is that of Nicotianamine synthase 2 (NAS2) from Oryza sativa subsp. indica (Rice).